Consider the following 300-residue polypeptide: Small ribosomal subunit protein uS2 (300 aa).

The interval Trp-269–Trp-300 is disordered.

Belongs to the universal ribosomal protein uS2 family. As to quaternary structure, component of the small ribosomal subunit. Mature ribosomes consist of a small (40S) and a large (60S) subunit. The 40S subunit contains about 33 different proteins and 1 molecule of RNA (18S). The 60S subunit contains about 49 different proteins and 3 molecules of RNA (25S, 5.8S and 5S). Interacts with rps21.

Its subcellular location is the cytoplasm. In terms of biological role, required for the assembly and/or stability of the 40S ribosomal subunit. Required for the processing of the 20S rRNA-precursor to mature 18S rRNA in a late step of the maturation of 40S ribosomal subunits. The protein is Small ribosomal subunit protein uS2 (rps0) of Aspergillus terreus (strain NIH 2624 / FGSC A1156).